The primary structure comprises 190 residues: Protein LZIC (190 aa).

Positions 2–63 (ASRGKTETSK…SEFNDSLKKI (62 aa)) form a coiled coil.

The protein belongs to the CTNNBIP1 family. In terms of assembly, does not interact with CTNNB1.

The chain is Protein LZIC (Lzic) from Mus musculus (Mouse).